The following is a 330-amino-acid chain: Glycerol-3-phosphate dehydrogenase [NAD(P)+] (330 aa).

Positions 10, 11, 31, and 105 each coordinate NADPH. Sn-glycerol 3-phosphate contacts are provided by lysine 105, glycine 135, and serine 137. Alanine 139 lines the NADPH pocket. Sn-glycerol 3-phosphate contacts are provided by lysine 190, aspartate 243, serine 253, arginine 254, and asparagine 255. Lysine 190 (proton acceptor) is an active-site residue. Arginine 254 serves as a coordination point for NADPH. NADPH is bound by residues valine 278 and glutamate 280.

This sequence belongs to the NAD-dependent glycerol-3-phosphate dehydrogenase family.

The protein resides in the cytoplasm. It catalyses the reaction sn-glycerol 3-phosphate + NAD(+) = dihydroxyacetone phosphate + NADH + H(+). The enzyme catalyses sn-glycerol 3-phosphate + NADP(+) = dihydroxyacetone phosphate + NADPH + H(+). Its pathway is membrane lipid metabolism; glycerophospholipid metabolism. In terms of biological role, catalyzes the reduction of the glycolytic intermediate dihydroxyacetone phosphate (DHAP) to sn-glycerol 3-phosphate (G3P), the key precursor for phospholipid synthesis. This is Glycerol-3-phosphate dehydrogenase [NAD(P)+] from Oleidesulfovibrio alaskensis (strain ATCC BAA-1058 / DSM 17464 / G20) (Desulfovibrio alaskensis).